The following is a 70-amino-acid chain: Toxin Isom2 (70 aa).

Residues 2–65 (KNGYAVDSSG…ISDTRKKYCD (64 aa)) enclose the LCN-type CS-alpha/beta domain. Cystine bridges form between C16–C37, C22–C42, C26–C44, and C38–C64.

Expressed by the venom gland.

The protein resides in the secreted. Its function is as follows. Excitatory insect beta-toxins induce a spastic paralysis. They bind voltage-independently at site-4 of sodium channels (Nav) and shift the voltage of activation toward more negative potentials thereby affecting sodium channel activation and promoting spontaneous and repetitive firing. The polypeptide is Toxin Isom2 (Isometrus vittatus (Bark scorpion)).